Reading from the N-terminus, the 176-residue chain is Small ribosomal subunit protein uS5 (176 aa).

The S5 DRBM domain maps to 11–74 (LSEVLVDVNR…QAAKKRMMKV (64 aa)).

Belongs to the universal ribosomal protein uS5 family. In terms of assembly, part of the 30S ribosomal subunit. Contacts proteins S4 and S8.

Functionally, with S4 and S12 plays an important role in translational accuracy. Its function is as follows. Located at the back of the 30S subunit body where it stabilizes the conformation of the head with respect to the body. This chain is Small ribosomal subunit protein uS5, found in Rickettsia africae (strain ESF-5).